The sequence spans 300 residues: Nicotinate-nucleotide pyrophosphorylase [carboxylating] (300 aa).

The interval 5–9 (QLLPK) is important for hexamer formation. Quinolinate contacts are provided by residues Arg107, 150-151 (RK), 172-173 (HR), Lys183, Glu213, Asp234, 260-262 (SGG), and Gly282.

It belongs to the NadC/ModD family. In terms of assembly, hexamer formed by 3 homodimers.

It catalyses the reaction nicotinate beta-D-ribonucleotide + CO2 + diphosphate = quinolinate + 5-phospho-alpha-D-ribose 1-diphosphate + 2 H(+). The protein operates within cofactor biosynthesis; NAD(+) biosynthesis; nicotinate D-ribonucleotide from quinolinate: step 1/1. Involved in the catabolism of quinolinic acid (QA). The protein is Nicotinate-nucleotide pyrophosphorylase [carboxylating] (qprt) of Dictyostelium discoideum (Social amoeba).